A 314-amino-acid chain; its full sequence is Porphobilinogen deaminase (314 aa).

Cys243 bears the S-(dipyrrolylmethanemethyl)cysteine mark.

The protein belongs to the HMBS family. As to quaternary structure, monomer. It depends on dipyrromethane as a cofactor.

It catalyses the reaction 4 porphobilinogen + H2O = hydroxymethylbilane + 4 NH4(+). Its pathway is porphyrin-containing compound metabolism; protoporphyrin-IX biosynthesis; coproporphyrinogen-III from 5-aminolevulinate: step 2/4. Tetrapolymerization of the monopyrrole PBG into the hydroxymethylbilane pre-uroporphyrinogen in several discrete steps. The protein is Porphobilinogen deaminase of Bordetella bronchiseptica (strain ATCC BAA-588 / NCTC 13252 / RB50) (Alcaligenes bronchisepticus).